The chain runs to 898 residues: Pyruvate, phosphate dikinase (898 aa).

The tract at residues 1-355 (MAKWVYTFGA…LWMLQTRSGK (355 aa)) is N-terminal. R96 lines the ATP pocket. A linker 1 region spans residues 356 to 412 (RTAKSALKIAVDMAEEGLISKEEAVARIDPASLDQLLHPTIDPHARRDIIGSGLPAS). Residues 413-511 (PGAATGEIVF…TLRKGDVITI (99 aa)) are central. Residue T466 is modified to Phosphothreonine; by PDRP1. Residue H468 is the Tele-phosphohistidine intermediate of the active site. The interval 512–546 (DGSSGQVLKGEIPMLQPELSGDFGKIMQWADASRR) is linker 2. The C-terminal stretch occupies residues 547 to 898 (MTVRTNAETP…VAEVQALAAS (352 aa)). Substrate is bound by residues R574, R630, E758, G779, T780, N781, and D782. Residue E758 coordinates Mg(2+). D782 lines the Mg(2+) pocket. C844 (proton donor) is an active-site residue.

This sequence belongs to the PEP-utilizing enzyme family. As to quaternary structure, homodimer. Mg(2+) serves as cofactor. Post-translationally, phosphorylation of Thr-466 in the dark inactivates the enzyme. Dephosphorylation upon light stimulation reactivates the enzyme.

It catalyses the reaction pyruvate + phosphate + ATP = phosphoenolpyruvate + AMP + diphosphate + H(+). Activated by light-induced dephosphorylation. Inhibited by dark-induced phosphorylation. Both reactions are catalyzed by PDRP1. Its function is as follows. Catalyzes the reversible phosphorylation of pyruvate and phosphate. The chain is Pyruvate, phosphate dikinase (ppdK) from Rhizobium meliloti (strain 1021) (Ensifer meliloti).